A 28-amino-acid chain; its full sequence is Omega-gliadin (28 aa).

Residues 1–28 form a disordered region; the sequence is ARQLNPSDQELQSPQQLYPQQPYPQQPY. The span at 9–20 shows a compositional bias: low complexity; the sequence is QELQSPQQLYPQ.

The protein is Omega-gliadin of Triticum monococcum (Einkorn wheat).